We begin with the raw amino-acid sequence, 365 residues long: Chorismate synthase (365 aa).

Arginine 46 contributes to the NADP(+) binding site. Residues 123–125, 241–242, glycine 281, 296–300, and arginine 322 each bind FMN; these read RSS, NG, and KPTPS.

Belongs to the chorismate synthase family. As to quaternary structure, homotetramer. It depends on FMNH2 as a cofactor.

It catalyses the reaction 5-O-(1-carboxyvinyl)-3-phosphoshikimate = chorismate + phosphate. The protein operates within metabolic intermediate biosynthesis; chorismate biosynthesis; chorismate from D-erythrose 4-phosphate and phosphoenolpyruvate: step 7/7. Functionally, catalyzes the anti-1,4-elimination of the C-3 phosphate and the C-6 proR hydrogen from 5-enolpyruvylshikimate-3-phosphate (EPSP) to yield chorismate, which is the branch point compound that serves as the starting substrate for the three terminal pathways of aromatic amino acid biosynthesis. This reaction introduces a second double bond into the aromatic ring system. The polypeptide is Chorismate synthase (Helicobacter pylori (strain HPAG1)).